Reading from the N-terminus, the 511-residue chain is Cytochrome P450 monooxyhenase eriC (511 aa).

Residues 2–22 (VLADFISIPTVSIACLAVLGI) form a helical membrane-spanning segment. Heme is bound at residue C445.

Belongs to the cytochrome P450 family. The cofactor is heme.

The protein localises to the membrane. The enzyme catalyses erinacol + reduced [NADPH--hemoprotein reductase] + O2 = cyathadiol + oxidized [NADPH--hemoprotein reductase] + H2O + H(+). The protein operates within secondary metabolite biosynthesis. Its function is as follows. Cytochrome P450 monooxygenase; part of the gene cluster that mediates the biosynthesis of erinacines, cyathane-xylosides that show unique biological activities, including leishmanicidal activity, stimulating activity for nerve growth-factor synthesis, and agonistic activity toward the kappa opioid receptor. Within the pathway, eriC hydroxylates erinacol at C-15 of the seven-membered ring to yield cyathadiol. The first step of the erinacines biosynthesis pathway is catalyzed by the geranylgeranyl diphosphate (GGPP) synthase eriE via conversion of farnesyl pyrophosphate and isopentyl pyrophosphate into geranylgeranyl pyrophosphate (GGPP). GGPP is then substrate of the diterpene cyclase eriG for the production of cyatha-3,12-diene. The cytochrome P450 monooxygenase eriI then hydroxylates cyatha-3,12-diene at C-14 of the seven-membered ring to produce erinacol, which is further hydroxylated at C-15 by the cytochrome P450 monooxygenase eriC to yield cyathadiol. The cytochrome P450 monooxygenase eriA then catalyzes C-11 hydroxylation in the presence of the short chain dehydrogenase/reductase (SDR) eriH, which leads to the production of cyathatriol. The acetyltransferase eriL converts cyathatriol into 11-O-acetyl-cyathatriol. The SDR eriH catalyzes further oxidation of 11-O-acetyl-cyathatriol into 1-O-acetylcyathin A3. Finally, the glycosyl transferase eriJ tranfers xylose from UDP-xylose onto C-14 of 11-O-acetyl-cyathatriol to form eracine Q. EriJ is also able to convert 11-O-acetyl-cyathatriol to eracine Q2 by using UDP-D-glucose as cosubstrate, but at a lower rate. This chain is Cytochrome P450 monooxyhenase eriC, found in Hericium erinaceus (Lion's mane mushroom).